A 102-amino-acid polypeptide reads, in one-letter code: Co-chaperonin GroES (102 aa).

The protein belongs to the GroES chaperonin family. As to quaternary structure, heptamer of 7 subunits arranged in a ring. Interacts with the chaperonin GroEL.

It localises to the cytoplasm. Its function is as follows. Together with the chaperonin GroEL, plays an essential role in assisting protein folding. The GroEL-GroES system forms a nano-cage that allows encapsulation of the non-native substrate proteins and provides a physical environment optimized to promote and accelerate protein folding. GroES binds to the apical surface of the GroEL ring, thereby capping the opening of the GroEL channel. This is Co-chaperonin GroES from Chlamydia trachomatis serovar L2 (strain ATCC VR-902B / DSM 19102 / 434/Bu).